Here is a 220-residue protein sequence, read N- to C-terminus: MGFQIAIDGPAASGKSTIAKLLAERLGFEHLNTGATYRAVAVYLKEKGLNPSSPREELEKALKDVKVDYRDGRVFINGKDYTEKIQSPEAGILASDFAKLDLVREHLVRIQREICDDKNIVVEGRDIGTVVLPDAQLKIFLTASLEARIERKLREYQKKGLNVSREEVERELISRDTQDSSRKIAPLKPAEDAVVIDTTSMSVNEVLQKILKLVEERMKA.

9-17 (GPAASGKST) lines the ATP pocket.

Belongs to the cytidylate kinase family. Type 1 subfamily.

Its subcellular location is the cytoplasm. The catalysed reaction is CMP + ATP = CDP + ADP. It carries out the reaction dCMP + ATP = dCDP + ADP. The chain is Cytidylate kinase from Thermotoga neapolitana (strain ATCC 49049 / DSM 4359 / NBRC 107923 / NS-E).